A 782-amino-acid polypeptide reads, in one-letter code: Endonuclease MutS2 (782 aa).

Residue 336-343 (GPNTGGKT) participates in ATP binding. Residues 707–782 (LDLRGYRYED…GFGVTVATLK (76 aa)) enclose the Smr domain.

The protein belongs to the DNA mismatch repair MutS family. MutS2 subfamily. Homodimer. Binds to stalled ribosomes, contacting rRNA.

In terms of biological role, endonuclease that is involved in the suppression of homologous recombination and thus may have a key role in the control of bacterial genetic diversity. Its function is as follows. Acts as a ribosome collision sensor, splitting the ribosome into its 2 subunits. Detects stalled/collided 70S ribosomes which it binds and splits by an ATP-hydrolysis driven conformational change. Acts upstream of the ribosome quality control system (RQC), a ribosome-associated complex that mediates the extraction of incompletely synthesized nascent chains from stalled ribosomes and their subsequent degradation. Probably generates substrates for RQC. This Staphylococcus aureus (strain bovine RF122 / ET3-1) protein is Endonuclease MutS2.